A 191-amino-acid polypeptide reads, in one-letter code: Signal peptidase IB (191 aa).

At M1–E7 the chain is on the cytoplasmic side. A helical membrane pass occupies residues W8–T28. Over P29 to N191 the chain is Extracellular. Active-site residues include S36 and K77.

Belongs to the peptidase S26 family.

Its subcellular location is the cell membrane. The catalysed reaction is Cleavage of hydrophobic, N-terminal signal or leader sequences from secreted and periplasmic proteins.. Functionally, essential for cell viability. The chain is Signal peptidase IB (spsB) from Staphylococcus aureus (strain Mu50 / ATCC 700699).